The sequence spans 95 residues: Small ribosomal subunit protein bS6 (95 aa).

It belongs to the bacterial ribosomal protein bS6 family.

Binds together with bS18 to 16S ribosomal RNA. The polypeptide is Small ribosomal subunit protein bS6 (Clostridium perfringens (strain ATCC 13124 / DSM 756 / JCM 1290 / NCIMB 6125 / NCTC 8237 / Type A)).